Here is a 51-residue protein sequence, read N- to C-terminus: Magnetosome protein Mms5 (51 aa).

The Lumenal segment spans residues 1–8 (MLSAKGVS). An LG region region spans residues 9-16 (LGLGLGLG). The chain crosses the membrane as a helical span at residues 9 to 29 (LGLGLGLGAWGPVLLGVVGVA). Residues 30–51 (GALALYGYYKNRNAEPAAAEAV) lie on the Cytoplasmic side of the membrane.

Belongs to the magnetosome MamD/Mms5 family. May undergo N-terminal cleavage.

It localises to the magnetosome membrane. Its function is as follows. Might be involved in magnetite crystal growth. This is Magnetosome protein Mms5 from Magnetospirillum gryphiswaldense (strain DSM 6361 / JCM 21280 / NBRC 15271 / MSR-1).